The chain runs to 807 residues: Glycerol-3-phosphate acyltransferase (807 aa).

The short motif at 308–313 (CHRSHM) is the HXXXXD motif element.

Belongs to the GPAT/DAPAT family.

It is found in the cell inner membrane. The catalysed reaction is sn-glycerol 3-phosphate + an acyl-CoA = a 1-acyl-sn-glycero-3-phosphate + CoA. The protein operates within phospholipid metabolism; CDP-diacylglycerol biosynthesis; CDP-diacylglycerol from sn-glycerol 3-phosphate: step 1/3. The chain is Glycerol-3-phosphate acyltransferase from Shewanella sp. (strain ANA-3).